A 266-amino-acid chain; its full sequence is Cysteine-rich repeat secretory protein 41 (266 aa).

A signal peptide spans 1-26; the sequence is MSSVFGSVHILAMIAIQLLLTHSVSS. Gnk2-homologous domains lie at 33 to 136 and 142 to 253; these read YLHH…SVAS and YEND…LYPF.

It belongs to the cysteine-rich repeat secretory protein family.

It is found in the secreted. The chain is Cysteine-rich repeat secretory protein 41 (CRRSP41) from Arabidopsis thaliana (Mouse-ear cress).